Here is a 574-residue protein sequence, read N- to C-terminus: Sorting nexin-33 (574 aa).

Residues 1–61 enclose the SH3 domain; that stretch reads MALKGRALYD…PASYVEIVRP (61 aa). Ser77 is subject to Phosphoserine. The span at 79-90 shows a compositional bias: polar residues; the sequence is GTQGSLYSSPSM. The interval 79–116 is disordered; it reads GTQGSLYSSPSMASPARSGGGSGFLSNPGSFEDDDDDD. The residue at position 92 (Ser92) is a Phosphoserine. The 111-residue stretch at 230–340 folds into the PX domain; it reads FACSIEDPTK…HFLSCLDDKQ (111 aa). A BAR domain is found at 371–574; it reads LQDVEDRVDT…EKTLHMYDHL (204 aa).

Belongs to the sorting nexin family. Homodimer (via BAR domain). Interacts with ADAM15. Interacts with FASLG. Interacts (via SH3 domain) with DNM1 and DNM2. Interacts with WASL. Interacts with FCHSD1 (via the F-BAR domain). Post-translationally, phosphorylated. In terms of tissue distribution, detected in brain (at protein level).

It localises to the cytoplasm. The protein localises to the cytosol. Its subcellular location is the membrane. The protein resides in the cytoplasmic vesicle membrane. Functionally, plays a role in the reorganization of the cytoskeleton, endocytosis and cellular vesicle trafficking via its interactions with membranes, WASL, DNM1 and DNM2. Acts both during interphase and at the end of mitotic cell divisions. Required for efficient progress through mitosis and cytokinesis. Required for normal formation of the cleavage furrow at the end of mitosis. Modulates endocytosis of cell-surface proteins, such as APP and PRNP; this then modulates the secretion of APP and PRNP peptides. Promotes membrane tubulation (in vitro). May promote the formation of macropinosomes. This is Sorting nexin-33 (Snx33) from Mus musculus (Mouse).